A 196-amino-acid chain; its full sequence is Large ribosomal subunit protein eL15 (196 aa).

The tract at residues P154–K196 is disordered.

This sequence belongs to the eukaryotic ribosomal protein eL15 family.

The polypeptide is Large ribosomal subunit protein eL15 (Methanospirillum hungatei JF-1 (strain ATCC 27890 / DSM 864 / NBRC 100397 / JF-1)).